A 239-amino-acid chain; its full sequence is Large ribosomal subunit protein uL2 (239 aa).

2 disordered regions span residues 1–21 (MGKS…KSPS) and 203–239 (PFGG…GRRK). Over residues 222-239 (PPGRKVGHIAARRTGRRK) the composition is skewed to basic residues.

It belongs to the universal ribosomal protein uL2 family. In terms of assembly, part of the 50S ribosomal subunit. Forms a bridge to the 30S subunit in the 70S ribosome.

Functionally, one of the primary rRNA binding proteins. Required for association of the 30S and 50S subunits to form the 70S ribosome, for tRNA binding and peptide bond formation. It has been suggested to have peptidyltransferase activity; this is somewhat controversial. Makes several contacts with the 16S rRNA in the 70S ribosome. The polypeptide is Large ribosomal subunit protein uL2 (Pyrococcus furiosus (strain ATCC 43587 / DSM 3638 / JCM 8422 / Vc1)).